Here is a 59-residue protein sequence, read N- to C-terminus: Large ribosomal subunit protein uL30 (59 aa).

It belongs to the universal ribosomal protein uL30 family. In terms of assembly, part of the 50S ribosomal subunit.

This chain is Large ribosomal subunit protein uL30, found in Rhodococcus erythropolis (strain PR4 / NBRC 100887).